Reading from the N-terminus, the 208-residue chain is Uracil phosphoribosyltransferase (208 aa).

Residues Arg78, Arg103, and 130-138 each bind 5-phospho-alpha-D-ribose 1-diphosphate; that span reads DPMLATGGS. Residues Ile193 and 198-200 each bind uracil; that span reads GDA. Residue Asp199 coordinates 5-phospho-alpha-D-ribose 1-diphosphate.

Belongs to the UPRTase family. The cofactor is Mg(2+).

It catalyses the reaction UMP + diphosphate = 5-phospho-alpha-D-ribose 1-diphosphate + uracil. It functions in the pathway pyrimidine metabolism; UMP biosynthesis via salvage pathway; UMP from uracil: step 1/1. With respect to regulation, allosterically activated by GTP. Its function is as follows. Catalyzes the conversion of uracil and 5-phospho-alpha-D-ribose 1-diphosphate (PRPP) to UMP and diphosphate. The protein is Uracil phosphoribosyltransferase of Klebsiella pneumoniae subsp. pneumoniae (strain ATCC 700721 / MGH 78578).